The following is a 1305-amino-acid chain: MSQKGIKSLTISIASPEQILSWSKGEITKPETINYKSLKPEPNGLFDESIFGPSKDYECYCGKYRKVKHKGKVCERCHVEITESIVRRERMGHIELAAPVAHIWFTKELPSPSKISLLLDITYKEVDQVVYFVNYIVLDEGNNEYDGKSIFNKKEVLDLTSPKNSIRSRNKLRRTLRNIQERIEEELNHEREALIQDFDYRLAVTYDQMLKDSNIPFSVKDVMAFIEKHTGVRFGIGAEAIHELLEKLNLEEEHEKIKQAIQNSPNAYDQKTKRLLRRLECVRWIKDSGSKPEWMVMTRIPVTPSETRPIISLDGGRFTTSDTNNFYRKIIIRNERLKQMQATDAPEILLDNEKRLLQEAVDSLFDNNSRKKPVVGKDKRPLKSLSNHLKGKQGLFRQNLLGKRVDYSGRSVIVVGPELKMYEVGIPALMILKLFRPYIISELIRKRDEFGNEIQPICANIKLAEQKILAQDDEIWPVVEKVIKQRPVILNRAPTLHRLGIQAFEPKMVDGKAIRLHPLVTTAFNADFDGDQMAVHIPLSKEAVAEARSILLASWHILGPKDGKPIITPTQDMILGIYYLTKEKFPQPIEEMILKDPVQARIEFINHFHIFATQDEAIRAYKLKTIRINDVIGITTKAFDNKSFSKEGILVTTVGKIIFNQAFPTNFPYINDVKNLYGDNQFEIIGMHESILDYLKAYNLKEPLTKKTLSTVIDYLYKVSEIEVVPQTMDKIKALGFKYSMISATSISAFDIPSYDQKYEYFKETDELVAKLREFYLDGKLTDDERYTKVVQAWSQTKDKVTHDIEKLINSDEYKDNPIVIMAKSGARGNTSNFTQLAGMRGLMSKSYNYDQKNNSGVIKDTIEIPIKHSFIEGLSVSEYFNSSFGARKGMTDTAMKTAKSGYMTRKLVDSTQAVVIKGNDCGTKEGIIVREIRNTKDNTSIESLKDRIVGRFSINPIYDTKNKLIIEGDKLITNEIANMIQNSGIREVEVRSPLHCSSLYGVCQKCFGLDLSTNKLIETGTAIGVIAAQSIGEPGTQLTMRTFHTGGVAGDTNITQGFERIKQLFDCIQPQENEKAIISQVKGTVDRIEKDSNTNGYNVVIKYNKDNFVSYPTRPNAVLRIKTGDNVVAGQKITEGSIDVNDLLKYAGIENVRHYIIKEVQKVYRMQGIEISDKYIEVIISQLTNKVTITNPGDSGLFVGETISINEFTEVAQSMLVNKKKPPSAINQVFGLDHAPSKSGSFLSAASFQDTKKILTDAAARSQKDMLIGLKENVILGNLIPAGTGLKDVEEVIAYGEEMYKKQY.

Residues cysteine 59, cysteine 61, cysteine 74, and cysteine 77 each contribute to the Zn(2+) site. Mg(2+)-binding residues include aspartate 527, aspartate 529, and aspartate 531. The Zn(2+) site is built by cysteine 922, cysteine 997, cysteine 1004, and cysteine 1007.

The protein belongs to the RNA polymerase beta' chain family. The RNAP catalytic core consists of 2 alpha, 1 beta, 1 beta' and 1 omega subunit. When a sigma factor is associated with the core the holoenzyme is formed, which can initiate transcription. Mg(2+) is required as a cofactor. The cofactor is Zn(2+).

It carries out the reaction RNA(n) + a ribonucleoside 5'-triphosphate = RNA(n+1) + diphosphate. Functionally, DNA-dependent RNA polymerase catalyzes the transcription of DNA into RNA using the four ribonucleoside triphosphates as substrates. This Ureaplasma urealyticum serovar 10 (strain ATCC 33699 / Western) protein is DNA-directed RNA polymerase subunit beta'.